We begin with the raw amino-acid sequence, 354 residues long: Selection and upkeep of intraepithelial T-cells protein 10 (354 aa).

Positions 1 to 52 (MFLRTQMEQSQADIFALIKPHFGVMESSASYLPGFFMTFLLLQTTVLTQAMS) are cleaved as a signal peptide. The Ig-like V-type domain occupies 53 to 141 (LDIQINIQVP…TNREKKRSVV (89 aa)). The Extracellular segment spans residues 53-158 (LDIQINIQVP…SEYMSLMSNK (106 aa)). A disulfide bridge connects residues C71 and C125. N129 carries N-linked (GlcNAc...) asparagine glycosylation. The chain crosses the membrane as a helical span at residues 159–179 (FSCPLTYLFIIIFLNCLKGML). The Cytoplasmic segment spans residues 180–209 (DFCCLKGKPVYFRELINKIKEVLNIKMRAC). Residues 210 to 230 (CTLIWEFLLIVLYIAFLPFYL) form a helical membrane-spanning segment. Over 231-252 (KFRSRASILDDAYPLHSNWLWD) the chain is Extracellular. A helical membrane pass occupies residues 253–273 (ICIVLSVLMIFFTGLSLFLLW). Residues 274 to 354 (TLNCYGQMSY…RLDCSLNWKT (81 aa)) are Cytoplasmic-facing.

Belongs to the SKINT family. In terms of tissue distribution, expressed in skin and thymus.

Its subcellular location is the membrane. May act by engaging a cell surface molecule on immature T-cells in the embryonic thymus. This is Selection and upkeep of intraepithelial T-cells protein 10 (Skint10) from Mus musculus (Mouse).